Here is a 638-residue protein sequence, read N- to C-terminus: MGKIENNERVILNVGGTRHETYRSTLKTLPGTRLALLASSEPQGDCLTAAGDKLQPLPPPLSPPPRPPPLSPVPSGCFEGGAGNCSSHGGNGSDHPGGGREFFFDRHPGVFAYVLNYYRTGKLHCPADVCGPLFEEELAFWGIDETDVEPCCWMTYRQHRDAEEALDIFETPDLIGGDPGDDEDLGGKRLGIEDAAGLGGPDGKSGRWRKLQPRMWALFEDPYSSRAARFIAFASLFFILVSITTFCLETHEAFNIVKNKTEPVINGTSAVLQYEIETDPALTYVEGVCVVWFTFEFLVRIVFSPNKLEFIKNLLNIIDFVAILPFYLEVGLSGLSSKAAKDVLGFLRVVRFVRILRIFKLTRHFVGLRVLGHTLRASTNEFLLLIIFLALGVLIFATMIYYAERVGAQPNDPSASEHTQFKNIPIGFWWAVVTMTTLGYGDMYPQTWSGMLVGALCALAGVLTIAMPVPVIVNNFGMYYSLAMAKQKLPRKRKKHIPPAPLASSPTFCKTELNMACNSTQSDTCLGKENRLLEHNRSVLSGDDSTGSEPPLSPPERLPIRRSSTRDKNRRGETCFLLTTGDYTCASDGGIRKGYEKSRSLNNIAGLAGNALRLSPVTSPYNSPCPLRRSRSPIPSIL.

Over 1-229 (MGKIENNERV…EDPYSSRAAR (229 aa)) the chain is Cytoplasmic. A disordered region spans residues 47–75 (LTAAGDKLQPLPPPLSPPPRPPPLSPVPS). Residues 56 to 72 (PLPPPLSPPPRPPPLSP) show a composition bias toward pro residues. The Zn(2+) site is built by His-124, Cys-130, Cys-151, and Cys-152. Residues 230-248 (FIAFASLFFILVSITTFCL) form a helical membrane-spanning segment. N-linked (GlcNAc...) asparagine glycans are attached at residues Asn-259 and Asn-266. Residues 284-303 (YVEGVCVVWFTFEFLVRIVF) traverse the membrane as a helical segment. Residues 304 to 314 (SPNKLEFIKNL) are Cytoplasmic-facing. The chain crosses the membrane as a helical span at residues 315–337 (LNIIDFVAILPFYLEVGLSGLSS). A helical; Voltage-sensor transmembrane segment spans residues 346–368 (FLRVVRFVRILRIFKLTRHFVGL). Topologically, residues 369–381 (RVLGHTLRASTNE) are cytoplasmic. A helical transmembrane segment spans residues 382-401 (FLLLIIFLALGVLIFATMIY). Residues Thr-437, Leu-438, Gly-439, and Tyr-440 each contribute to the K(+) site. Positions 437–442 (TLGYGD) match the Selectivity filter motif. Residues 451–473 (MLVGALCALAGVLTIAMPVPVIV) traverse the membrane as a helical segment. Residues 474-638 (NNFGMYYSLA…RSRSPIPSIL (165 aa)) lie on the Cytoplasmic side of the membrane. The disordered stretch occupies residues 538-572 (SVLSGDDSTGSEPPLSPPERLPIRRSSTRDKNRRG). Ser-564 is modified (phosphoserine; by PKA). Phosphoserine is present on Ser-600.

It belongs to the potassium channel family. C (Shaw) (TC 1.A.1.2) subfamily. Kv3.2/KCNC2 sub-subfamily. In terms of assembly, homotetramer and heterotetramer with other channel-forming alpha subunits, such as KCNC1. Interacts with KCNC1. Homotetramer or heterotetramer channel activity is regulated by association with modulating ancillary subunits such as KCNE1, KCNE2 and KCNE3, creating a functionally diverse range of channel complexes. Interacts with KCNE1, KCNE2 and KCNE3. In terms of processing, phosphorylated by PKA in cortical synaptosomes. cAMP-dependent phosphorylation inhibits channel activity. Histamine H2 receptor- and PKA-induced phosphorylation extends action potential spike duration, reduces action potential spike amplitude, sustains maximum firing frequency in hippocampal interneurons; also reduces the incidence of high-frequency oscillations in hippocampal CA3 pyramidal cell layers. In terms of tissue distribution, expressed in neurons of the visual cortex during postnatal development. Expressed in neurons of the globus pallidus at postnatal age day 7 (P7), onward. Expressed in thalamic relay neurons. Expressed in neurons in layer IV and deeper cortical layers of the neocortex. Expressed in hippocampal interneurons. Expressed in nonpyramidal interneurons in the basolateral amygdala. Expressed in retinal ganglion cells (at protein level). Widely expressed in the brain. Expressed in numerous thalamic relay neurons throughout the dorsal thalamus. Expressed in interneurons of the deep layers V-VI of the cerebral cortex, the CA1 and CA3 pyramidal and dentate gyrus (DG) granule cells of the hippocampus, in neurons of the caudate-putamen, globus pallidus and subthalamic nucleus. Also expressed in the optic layer of interior colliculus, the inferior colliculus, the red nucleus, the medial geniculate, the ventral lateral lemiscus, the reticulotegmental nucleus and in the deep cerebellar nuclei. Expressed in globus pallidus (GP) neurons.

Its subcellular location is the cell membrane. The protein resides in the membrane. The protein localises to the perikaryon. It is found in the cell projection. It localises to the axon. Its subcellular location is the synapse. The protein resides in the synaptosome. The protein localises to the dendrite. It is found in the postsynaptic cell membrane. It localises to the presynaptic cell membrane. Its subcellular location is the apical cell membrane. The protein resides in the basolateral cell membrane. It carries out the reaction K(+)(in) = K(+)(out). Inhibited by Stichodactyla helianthus peptide ShK. Inhibited by millimolar levels of tetraethylammonium (TEA). Contrary to other channels, inhibited only by millimolar levels of 4-aminopyridine (4-AP). Functionally, voltage-gated potassium channel that mediates transmembrane potassium transport in excitable membranes, primarily in the brain. Contributes to the regulation of the fast action potential repolarization and in sustained high-frequency firing in neurons of the central nervous system. Homotetramer channels mediate delayed-rectifier voltage-dependent potassium currents that activate rapidly at high-threshold voltages and inactivate slowly. Forms tetrameric channels through which potassium ions pass in accordance with their electrochemical gradient. The channel alternates between opened and closed conformations in response to the voltage difference across the membrane. Can form functional homotetrameric channels and heterotetrameric channels that contain variable proportions of KCNC1, and possibly other family members as well; channel properties depend on the type of alpha subunits that are part of the channel. Channel properties may be modulated either by the association with ancillary subunits, such as KCNE1, KCNE2 and KCNE3 or indirectly by nitric oxide (NO) through a cGMP- and PKG-mediated signaling cascade, slowing channel activation and deactivation of delayed rectifier potassium channels. Contributes to fire sustained trains of very brief action potentials at high frequency in retinal ganglion cells, thalamocortical and suprachiasmatic nucleus (SCN) neurons and in hippocampal and neocortical interneurons. Sustained maximal action potential firing frequency in inhibitory hippocampal interneurons is negatively modulated by histamine H2 receptor activation in a cAMP- and protein kinase (PKA) phosphorylation-dependent manner. Plays a role in maintaining the fidelity of synaptic transmission in neocortical GABAergic interneurons by generating action potential (AP) repolarization at nerve terminals, thus reducing spike-evoked calcium influx and GABA neurotransmitter release. Required for long-range synchronization of gamma oscillations over distance in the neocortex. Contributes to the modulation of the circadian rhythm of spontaneous action potential firing in suprachiasmatic nucleus (SCN) neurons in a light-dependent manner. This is Voltage-gated potassium channel KCNC2 from Rattus norvegicus (Rat).